A 361-amino-acid polypeptide reads, in one-letter code: Ribosomal RNA large subunit methyltransferase M (361 aa).

S-adenosyl-L-methionine-binding positions include S187, C220 to G223, D239, D259, and D276. K305 (proton acceptor) is an active-site residue.

It belongs to the class I-like SAM-binding methyltransferase superfamily. RNA methyltransferase RlmE family. RlmM subfamily. As to quaternary structure, monomer.

It localises to the cytoplasm. The catalysed reaction is cytidine(2498) in 23S rRNA + S-adenosyl-L-methionine = 2'-O-methylcytidine(2498) in 23S rRNA + S-adenosyl-L-homocysteine + H(+). Catalyzes the 2'-O-methylation at nucleotide C2498 in 23S rRNA. This Shewanella putrefaciens (strain CN-32 / ATCC BAA-453) protein is Ribosomal RNA large subunit methyltransferase M.